We begin with the raw amino-acid sequence, 118 residues long: Small ribosomal subunit protein uS13 (118 aa).

The interval 94-118 is disordered; the sequence is SLPLRGQRTKTNARTRKGPRKPIKK.

The protein belongs to the universal ribosomal protein uS13 family. Part of the 30S ribosomal subunit. Forms a loose heterodimer with protein S19. Forms two bridges to the 50S subunit in the 70S ribosome.

Its function is as follows. Located at the top of the head of the 30S subunit, it contacts several helices of the 16S rRNA. In the 70S ribosome it contacts the 23S rRNA (bridge B1a) and protein L5 of the 50S subunit (bridge B1b), connecting the 2 subunits; these bridges are implicated in subunit movement. Contacts the tRNAs in the A and P-sites. This chain is Small ribosomal subunit protein uS13, found in Vibrio vulnificus (strain CMCP6).